The sequence spans 928 residues: MORC family CW-type zinc finger protein 4 (928 aa).

A CW-type zinc finger spans residues 417–469; that stretch reads RIPDQTWVQCDECLKWRRLPGMVDPSTLPARWFCYYNPHPKFKRCSVPEEQER. The Zn(2+) site is built by cysteine 426, cysteine 429, cysteine 450, and cysteine 461. Disordered regions lie at residues 474 to 510, 527 to 546, 599 to 649, and 718 to 766; these read LHRS…TPPL, NSPS…PRLK, AYPE…DQDQ, and RAES…LKRT. A compositionally biased stretch (basic and acidic residues) spans 485 to 497; it reads AAEKKQKPMESDK. 3 stretches are compositionally biased toward basic and acidic residues: residues 626–636, 739–748, and 756–766; these read ESNKHTEENRE, KGKDCQDSRS, and TPKESEELKRT. A coiled-coil region spans residues 758-867; that stretch reads KESEELKRTT…LEVLQKAQVS (110 aa).

The protein resides in the nucleus. In terms of biological role, histone methylation reader which binds to non-methylated (H3K4me0), monomethylated (H3K4me1), dimethylated (H3K4me2) and trimethylated (H3K4me3) 'Lys-4' on histone H3. The order of binding preference is H3K4me3 &gt; H3K4me2 &gt; H3K4me1 &gt; H3K4me0. The protein is MORC family CW-type zinc finger protein 4 (Morc4) of Mus musculus (Mouse).